Consider the following 290-residue polypeptide: Eukaryotic translation initiation factor 3 subunit F-2 (290 aa).

An MPN domain is found at Val12–Gly150.

The protein belongs to the eIF-3 subunit F family. In terms of assembly, component of the eukaryotic translation initiation factor 3 (eIF-3) complex. The eIF-3 complex interacts with pix.

It is found in the cytoplasm. Its function is as follows. Component of the eukaryotic translation initiation factor 3 (eIF-3) complex, which is involved in protein synthesis of a specialized repertoire of mRNAs and, together with other initiation factors, stimulates binding of mRNA and methionyl-tRNAi to the 40S ribosome. The eIF-3 complex specifically targets and initiates translation of a subset of mRNAs involved in cell proliferation. This Drosophila mojavensis (Fruit fly) protein is Eukaryotic translation initiation factor 3 subunit F-2.